Consider the following 196-residue polypeptide: Xanthine phosphoribosyltransferase (196 aa).

Xanthine-binding residues include leucine 20 and asparagine 27. 128–132 (ATGAA) provides a ligand contact to 5-phospho-alpha-D-ribose 1-diphosphate. Lysine 156 is a xanthine binding site.

This sequence belongs to the purine/pyrimidine phosphoribosyltransferase family. Xpt subfamily. In terms of assembly, homodimer.

The protein localises to the cytoplasm. It catalyses the reaction XMP + diphosphate = xanthine + 5-phospho-alpha-D-ribose 1-diphosphate. It functions in the pathway purine metabolism; XMP biosynthesis via salvage pathway; XMP from xanthine: step 1/1. Converts the preformed base xanthine, a product of nucleic acid breakdown, to xanthosine 5'-monophosphate (XMP), so it can be reused for RNA or DNA synthesis. The chain is Xanthine phosphoribosyltransferase from Brevibacillus brevis (strain 47 / JCM 6285 / NBRC 100599).